The sequence spans 478 residues: Lactate utilization protein B (478 aa).

4Fe-4S ferredoxin-type domains lie at 303–333 (GTEF…GHAY) and 352–381 (YDDH…LHEQ). 7 residues coordinate [4Fe-4S] cluster: cysteine 312, cysteine 315, cysteine 318, cysteine 322, cysteine 365, cysteine 368, and cysteine 372.

It belongs to the LutB/YkgF family.

In terms of biological role, is involved in L-lactate degradation and allows cells to grow with lactate as the sole carbon source. Has probably a role as an electron transporter during oxidation of L-lactate. In Oceanobacillus iheyensis (strain DSM 14371 / CIP 107618 / JCM 11309 / KCTC 3954 / HTE831), this protein is Lactate utilization protein B.